The primary structure comprises 950 residues: uncharacterized protein (950 aa).

This is an uncharacterized protein from Rickettsia prowazekii (strain Madrid E).